Here is an 845-residue protein sequence, read N- to C-terminus: MKFFFIFFIFLFSFLIQSCYSDNTILRSQSLKDGDVIYSEGKRFAFGFFSLGNSKLRYVGIWYAQVSEQTIVWVANRDHPINDTSGLIKFSTRGNLCVYASGNGTEPIWSTDVIDMIQEPALVAKLSDLGNLVLLDPVTGKSFWESFNHPTNTLLPFMKFGFTRQSGVDRIMTSWRSPGDPGSGNITYRIERRGFPQMMMYKGLTLWWRTGSWTGQRWSGVPEMTNKFIFNISFVNNPDEVSITYGVLDASVTTRMVLNETGTLQRFRWNGRDKKWIGFWSAPEDKCDIYNHCGFNGYCDSTSTEKFECSCLPGYEPKTPRDWFLRDASDGCTRIKADSICNGKEGFAKLKRVKIPNTSAVNVDMNITLKECEQRCLKNCSCVAYASAYHESQDGAKGCLTWHGNMLDTRTYLSSGQDFYLRVDKSELARWNGNGASGKKRLVLILISLIAVVMLLLISFHCYLRKRRQRTQSNRLRKAPSSFAPSSFDLEDSFILEELEDKSRSRELPLFELSTIATATNNFAFQNKLGAGGFGPVYKGVLQNGMEIAVKRLSKSSGQGMEEFKNEVKLISKLQHRNLVRILGCCVEFEEKMLVYEYLPNKSLDYFIFHEEQRAELDWPKRMGIIRGIGRGILYLHQDSRLRIIHRDLKASNVLLDNEMIPKIADFGLARIFGGNQIEGSTNRVVGTYGYMSPEYAMDGQFSIKSDVYSFGVLILEIITGKRNSAFYEESLNLVKHIWDRWENGEAIEIIDKLMGEETYDEGEVMKCLHIGLLCVQENSSDRPDMSSVVFMLGHNAIDLPSPKHPAFTAGRRRNTKTGGSSDNWPSGETSSTINDVTLTDVQGR.

Positions 1–21 (MKFFFIFFIFLFSFLIQSCYS) are cleaved as a signal peptide. Residues 22 to 147 (DNTILRSQSL…VTGKSFWESF (126 aa)) form the Bulb-type lectin domain. At 22 to 441 (DNTILRSQSL…NGNGASGKKR (420 aa)) the chain is on the extracellular side. N-linked (GlcNAc...) asparagine glycans are attached at residues Asn-82, Asn-103, Asn-185, Asn-231, and Asn-259. An EGF-like domain is found at 283–321 (PEDKCDIYNHCGFNGYCDSTSTEKFECSCLPGYEPKTPR). 2 disulfide bridges follow: Cys-287–Cys-299 and Cys-293–Cys-309. A PAN domain is found at 341 to 424 (CNGKEGFAKL…SGQDFYLRVD (84 aa)). 3 N-linked (GlcNAc...) asparagine glycosylation sites follow: Asn-357, Asn-366, and Asn-379. 2 disulfides stabilise this stretch: Cys-372/Cys-399 and Cys-376/Cys-382. The helical transmembrane segment at 442–462 (LVLILISLIAVVMLLLISFHC) threads the bilayer. Over 463-845 (YLRKRRQRTQ…DVTLTDVQGR (383 aa)) the chain is Cytoplasmic. One can recognise a Protein kinase domain in the interval 523–808 (FAFQNKLGAG…DLPSPKHPAF (286 aa)). Residues 529–537 (LGAGGFGPV) and Lys-551 contribute to the ATP site. The interval 612 to 629 (EQRAELDWPKRMGIIRGI) is caM-binding. The Proton acceptor role is filled by Asp-648. The interval 803–845 (PKHPAFTAGRRRNTKTGGSSDNWPSGETSSTINDVTLTDVQGR) is disordered. Polar residues predominate over residues 817 to 845 (KTGGSSDNWPSGETSSTINDVTLTDVQGR).

The protein belongs to the protein kinase superfamily. Ser/Thr protein kinase family.

The protein localises to the cell membrane. The enzyme catalyses L-seryl-[protein] + ATP = O-phospho-L-seryl-[protein] + ADP + H(+). The catalysed reaction is L-threonyl-[protein] + ATP = O-phospho-L-threonyl-[protein] + ADP + H(+). In Arabidopsis thaliana (Mouse-ear cress), this protein is G-type lectin S-receptor-like serine/threonine-protein kinase At1g11410.